The following is a 377-amino-acid chain: uncharacterized protein (377 aa).

Positions 1–25 (MAQQTNVAGQKTEKQRKAPFRADHV) are disordered. Positions 11–24 (KTEKQRKAPFRADH) are enriched in basic and acidic residues.

It to B.subtilis YxjG.

This is an uncharacterized protein from Bacillus subtilis (strain 168).